Consider the following 146-residue polypeptide: Hemoglobin subunit beta (146 aa).

The residue at position 1 (Val1) is an N-acetylvaline. The region spanning 2–146 (HLTGEEKSTV…VATALAHKYH (145 aa)) is the Globin domain. Phosphoserine is present on Ser44. An N6-acetyllysine modification is found at Lys59. His63 lines the heme b pocket. Lys82 carries the post-translational modification N6-acetyllysine. A heme b-binding site is contributed by His92. S-nitrosocysteine is present on Cys93. Lys144 is subject to N6-acetyllysine.

Belongs to the globin family. In terms of assembly, heterotetramer of two alpha chains and two beta chains. As to expression, red blood cells.

In terms of biological role, involved in oxygen transport from the lung to the various peripheral tissues. This Macrotus californicus (Californian leaf-nosed bat) protein is Hemoglobin subunit beta (HBB).